The sequence spans 240 residues: Poxin (240 aa).

Residue His-46 is the Proton donor of the active site. Tyr-181 serves as the catalytic Shared with catalytic histidine of dimeric partner. Lys-185 acts as the Proton acceptor; shared with catalytic histidine of dimeric partner in catalysis.

Belongs to the poxin family. Homodimer.

It catalyses the reaction 2',3'-cGAMP + H2O = Gp(2'-5')Ap(3') + H(+). In terms of biological role, nuclease that cleaves host 2',3'-cGAMP. This chain is Poxin (p26), found in Bombyx mori (Silk moth).